The following is a 312-amino-acid chain: Tumor necrosis factor receptor type 1-associated DEATH domain protein (312 aa).

Residues 147 to 163 carry the Nuclear export signal motif; it reads LRDEELAELEDALRNLK. The disordered stretch occupies residues 170-195; sequence GGDGEVASAPLQPPVPSLSEVKPPPP. The Death domain occupies 179-289; it reads PLQPPVPSLS…ATLQRLVEAL (111 aa). Over residues 180–195 the composition is skewed to pro residues; that stretch reads LQPPVPSLSEVKPPPP. Residues 222–289 are interaction with KRT14 and KRT18; that stretch reads FARSVGLKWR…ATLQRLVEAL (68 aa). Positions 231 to 244 match the Nuclear localization signal motif; it reads RKVGRSLQRGCRAL. R235 and R245 each carry a (Microbial infection) N-beta-linked (GlcNAc) arginine glycan.

As to quaternary structure, stimulation of TNF-alpha receptor TNFRSF1A leads to the formation of two distinct signaling complexes. Plasma membrane-bound complex I is composed of TNFRSF1A, TRADD, RIPK1, TRAF2 and BIRC2/c-IAP1 or BIRC3 which interacts with CHUCK/IKK-alpha, IKBKB/IKK-beta and IKBKG/IKK-gamma promoting cell survival. Subsequently, TRADD, RIPK1 and TRAF2 dissociate from TNFRSF1A and form cytoplasmic complex II with FADD and caspase CASP8 promoting cell apoptosis. Within complex I, interacts with TNFRSF1A/TNFR1, TRAF2 and kinase RIPK1. Within complex I, interacts with TRPC4AP; the interaction promotes NF-kappa B activation. UXT1 associates with complex I; the interaction prevents the formation of complex II. Within complex I Interacts with scaffold protein DAB2IP. Interacts with autophagy receptor SQSTM1. Interacts with E3 ligase TRIP12. Interacts with kinase HIPK2. Interacts with keratin KRT14. Interacts with keratin KRT18. Interacts with keratins KRT16 and KRT17. Interacts with FADD. Interacts with TOMM70. Interacts with TMC8; the interaction impairs the formation of complex I and facilites complex II formation. (Microbial infection) Glycosylated at Arg-235 by enteropathogenic E.coli protein NleB1, C.rodentium protein NleB and S.typhimurium proteins Ssek1 and Ssek3: arginine GlcNAcylation prevents homotypic/heterotypic death domain interactions and assembly of the oligomeric TNFRSF1A/TNFR1 complex, thereby disrupting TNF signaling. Found in all examined tissues.

The protein resides in the nucleus. It is found in the cytoplasm. The protein localises to the cytoskeleton. In terms of biological role, adapter molecule for TNFRSF1A/TNFR1 that specifically associates with the cytoplasmic domain of activated TNFRSF1A/TNFR1 mediating its interaction with FADD. Overexpression of TRADD leads to two major TNF-induced responses, apoptosis and activation of NF-kappa-B. The nuclear form acts as a tumor suppressor by preventing ubiquitination and degradation of isoform p19ARF/ARF of CDKN2A by TRIP12: acts by interacting with TRIP12, leading to disrupt interaction between TRIP12 and isoform p19ARF/ARF of CDKN2A. The chain is Tumor necrosis factor receptor type 1-associated DEATH domain protein from Homo sapiens (Human).